Consider the following 981-residue polypeptide: Isoleucine--tRNA ligase (981 aa).

A 'HIGH' region motif is present at residues 50-60 (PTTNGMPHVGH). Residues 604–608 (KMSKS) carry the 'KMSKS' region motif. Lys607 serves as a coordination point for ATP.

The protein belongs to the class-I aminoacyl-tRNA synthetase family. IleS type 2 subfamily. In terms of assembly, monomer. Zn(2+) serves as cofactor.

It is found in the cytoplasm. The enzyme catalyses tRNA(Ile) + L-isoleucine + ATP = L-isoleucyl-tRNA(Ile) + AMP + diphosphate. In terms of biological role, catalyzes the attachment of isoleucine to tRNA(Ile). As IleRS can inadvertently accommodate and process structurally similar amino acids such as valine, to avoid such errors it has two additional distinct tRNA(Ile)-dependent editing activities. One activity is designated as 'pretransfer' editing and involves the hydrolysis of activated Val-AMP. The other activity is designated 'posttransfer' editing and involves deacylation of mischarged Val-tRNA(Ile). The polypeptide is Isoleucine--tRNA ligase (Pyrobaculum aerophilum (strain ATCC 51768 / DSM 7523 / JCM 9630 / CIP 104966 / NBRC 100827 / IM2)).